The chain runs to 171 residues: 3-hydroxydecanoyl-[acyl-carrier-protein] dehydratase (171 aa).

The active site involves His-70.

This sequence belongs to the thioester dehydratase family. FabA subfamily. Homodimer.

The protein localises to the cytoplasm. The catalysed reaction is a (3R)-hydroxyacyl-[ACP] = a (2E)-enoyl-[ACP] + H2O. It catalyses the reaction (3R)-hydroxydecanoyl-[ACP] = (2E)-decenoyl-[ACP] + H2O. It carries out the reaction (2E)-decenoyl-[ACP] = (3Z)-decenoyl-[ACP]. Its pathway is lipid metabolism; fatty acid biosynthesis. Its function is as follows. Necessary for the introduction of cis unsaturation into fatty acids. Catalyzes the dehydration of (3R)-3-hydroxydecanoyl-ACP to E-(2)-decenoyl-ACP and then its isomerization to Z-(3)-decenoyl-ACP. Can catalyze the dehydratase reaction for beta-hydroxyacyl-ACPs with saturated chain lengths up to 16:0, being most active on intermediate chain length. In Shewanella sediminis (strain HAW-EB3), this protein is 3-hydroxydecanoyl-[acyl-carrier-protein] dehydratase.